Here is a 1060-residue protein sequence, read N- to C-terminus: Positive regulator of purine utilization (1060 aa).

Residues 1–15 (MLNPSTSDIHTSPTA) show a composition bias toward polar residues. A disordered region spans residues 1-48 (MLNPSTSDIHTSPTAVGNGRKRPHPIADSGSAMPSDPSAQQLPHPANE). The segment at residues 67–94 (CNRCRQRKNRCDQRLPRCQACEKAGVRC) is a DNA-binding region (zn(2)-C6 fungal-type). 5 disordered regions span residues 163–207 (EIAA…DAED), 251–282 (SVPG…TTRD), 367–391 (AEDQ…SRQY), 811–862 (VQTS…RFDM), and 877–969 (RQGS…PSGM). Composition is skewed to basic and acidic residues over residues 170-182 (SNDK…KEKN), 189-207 (KASR…DAED), and 260-269 (GPSRPKERLP). Residues 272 to 282 (ATGTEGSTTRD) show a composition bias toward polar residues. Basic and acidic residues predominate over residues 367–377 (AEDQKEGRDHS). The span at 811–831 (VQTSTSGSRQFNATQSRSRPY) shows a compositional bias: polar residues. Low complexity-rich tracts occupy residues 832-859 (SRQQ…PLPR) and 930-952 (PRYY…AASG).

It is found in the nucleus. Its function is as follows. Mediates the induction of a number of unlinked genes involved in purine utilization. Binds to the consensus sequence 5'-TCGGNNNNNNCCGA-3'. This Emericella nidulans (strain FGSC A4 / ATCC 38163 / CBS 112.46 / NRRL 194 / M139) (Aspergillus nidulans) protein is Positive regulator of purine utilization (uaY).